Consider the following 608-residue polypeptide: N(6)-adenosine-methyltransferase MT-A70-like protein (608 aa).

The segment covering 250–265 has biased composition (basic and acidic residues); it reads KKKQERRDEKELRPDV. Residues 250 to 272 are disordered; that stretch reads KKKQERRDEKELRPDVDAGENVT. S-adenosyl-L-methionine contacts are provided by residues 395 to 396 and D413; that span reads DL. Residues 414–428 form a gate loop 1 region; the sequence is PPWDIHMELPYGTMS. Positions 480–497 are interphase loop; sequence QLQRIIRTGRTGHWLNHG. The positively charged region required for RNA-binding stretch occupies residues 483-496; it reads RIIRTGRTGHWLNH. Residues 525-533 form a gate loop 2 region; it reads VRATSHKPD. Residues K531, 554-557, and 567-568 each bind S-adenosyl-L-methionine; these read RPHN and NQ.

It belongs to the MT-A70-like family. As to quaternary structure, component of the WMM complex, a N6-methyltransferase complex composed of a catalytic subcomplex, named MAC, and of an associated subcomplex, named MACOM. The MAC subcomplex is composed of Ime4/Mettl3 and Mettl14. The MACOM subcomplex is composed of fl(2)d, Flacc/Xio, Hakai, vir, and, in some cases of nito. In terms of tissue distribution, expressed in testes. In the ovaries, detected in germaria, prefollicle, follicle and polar cells (at protein levels). Detected in the ooplasm and in the cells of the 16-cell cyst of early stages (at protein levels).

It localises to the nucleus. It catalyses the reaction an adenosine in mRNA + S-adenosyl-L-methionine = an N(6)-methyladenosine in mRNA + S-adenosyl-L-homocysteine + H(+). Functionally, catalytic component of the WMM complex, a complex that mediates N6-methyladenosine (m6A) methylation of mRNAs, a modification that plays a role in the efficiency of mRNA splicing and is required for sex determination. In the heterodimer formed with Mettl14, constitutes the catalytic core. Required for sex determination and dosage compensation via Sxl alternative splicing: m6A methylation acts as a key regulator of Sxl pre-mRNA and promotes female-specific alternative splicing of Sxl, which determines female physiognomy. M6A methylation is also required for neuronal functions. During oogenesis, required for egg chamber development probably as part of the N/Notch signaling. This chain is N(6)-adenosine-methyltransferase MT-A70-like protein, found in Drosophila melanogaster (Fruit fly).